Reading from the N-terminus, the 464-residue chain is MSTAALVEGKIVQCIGAVIDVEFPRDSMPKIYDALILDGSELTLEVQQQLGDGVVRTICLGASDGLRRGLTVKNTAKPISVPVGKPTLGRIMDVLGRPIDEAGPIESEHTRSIHQKAPAFDELSPSTELLETGIKVIDLICPFAKGGKVGLFGGAGVGKTVNMMELINNIAKEHGGYSVFAGVGERTREGNDFYHEMKDSNVLDKVALVYGQMNEPPGNRLRVALTGLTMAEHFRDEGLDVLFFVDNIYRFTLAGTEVSALLGRMPSAVGYQPTLAEEMGKLQERITSTKKGSITSVQAVYVPADDLTDPSPATTFGHLDATVVLSRDIASLGIYPAVDPLDSTSRQIDPNVIGEEHYTITRRVQQTLQRYKELRDIIAILGMDELSPEDKLSVARARKIQRFLSQPFHVAEVFTGSPGKYVPLKETIRGFKMIVDGECDHLPEQAFYMVGTIDEAFEKAKKIQ.

Glycine 153–threonine 160 lines the ATP pocket.

The protein belongs to the ATPase alpha/beta chains family. As to quaternary structure, F-type ATPases have 2 components, CF(1) - the catalytic core - and CF(0) - the membrane proton channel. CF(1) has five subunits: alpha(3), beta(3), gamma(1), delta(1), epsilon(1). CF(0) has three main subunits: a(1), b(2) and c(9-12). The alpha and beta chains form an alternating ring which encloses part of the gamma chain. CF(1) is attached to CF(0) by a central stalk formed by the gamma and epsilon chains, while a peripheral stalk is formed by the delta and b chains.

The protein resides in the cell inner membrane. It catalyses the reaction ATP + H2O + 4 H(+)(in) = ADP + phosphate + 5 H(+)(out). In terms of biological role, produces ATP from ADP in the presence of a proton gradient across the membrane. The catalytic sites are hosted primarily by the beta subunits. This Burkholderia vietnamiensis (strain G4 / LMG 22486) (Burkholderia cepacia (strain R1808)) protein is ATP synthase subunit beta.